Reading from the N-terminus, the 411-residue chain is MQSWSSAPVPIVPGRGPELRLYDTADRQVRPVAPGNTATMYVCGITPYDATHLGHAATYLAFDLIHRLWLDLGHEVRYVQNVTDVDDPLFERADRDGVDWRDLAAQEVALFREDMAALRVLSPHDYVGATEAVAEIIELVEKLLASGAAYVLDGEHPDVYYRSDATLQFGYESGYDRDTMLGLFEQRGGDPGRPGKNDALDALLWRAARPGEPSWPSPFGPGRPGWHIECAAIALSRVGSGLDVQGGGSDLIFPHHEFTAAHAECVTGERRFARHYVHAGMIGWDGHKMSKSRGNLVLVSGLRAEGVNPAAVRLGLLAGHYRADRFWSQQVLDEAVGRLQRWRAATTLPAGPDAAAVVARVRQYLADDLNTPKAIAALDGWATDALDYGGHDEVAPRLVASTIDALLGVDL.

Cys-43 provides a ligand contact to Zn(2+). L-cysteinyl-5'-AMP is bound by residues 43–46 (CGIT), Thr-58, and 81–83 (NVT). A 'HIGH' region motif is present at residues 45–55 (ITPYDATHLGH). A 'ERGGDP' region motif is present at residues 186 to 191 (QRGGDP). Trp-226 lines the L-cysteinyl-5'-AMP pocket. Cys-230 contacts Zn(2+). 248 to 250 (GSD) contributes to the L-cysteinyl-5'-AMP binding site. His-255 provides a ligand contact to Zn(2+). Ile-282 is a binding site for L-cysteinyl-5'-AMP. Residues 288–292 (KMSKS) carry the 'KMSKS' region motif.

The protein belongs to the class-I aminoacyl-tRNA synthetase family. MshC subfamily. In terms of assembly, monomer. Zn(2+) is required as a cofactor.

It catalyses the reaction 1D-myo-inositol 2-amino-2-deoxy-alpha-D-glucopyranoside + L-cysteine + ATP = 1D-myo-inositol 2-(L-cysteinylamino)-2-deoxy-alpha-D-glucopyranoside + AMP + diphosphate + H(+). In terms of biological role, catalyzes the ATP-dependent condensation of GlcN-Ins and L-cysteine to form L-Cys-GlcN-Ins. In Mycobacterium marinum (strain ATCC BAA-535 / M), this protein is L-cysteine:1D-myo-inositol 2-amino-2-deoxy-alpha-D-glucopyranoside ligase.